The chain runs to 141 residues: Large ribosomal subunit protein uL11 (141 aa).

It belongs to the universal ribosomal protein uL11 family. As to quaternary structure, part of the ribosomal stalk of the 50S ribosomal subunit. Interacts with L10 and the large rRNA to form the base of the stalk. L10 forms an elongated spine to which L12 dimers bind in a sequential fashion forming a multimeric L10(L12)X complex. Post-translationally, one or more lysine residues are methylated.

In terms of biological role, forms part of the ribosomal stalk which helps the ribosome interact with GTP-bound translation factors. The polypeptide is Large ribosomal subunit protein uL11 (Petrotoga mobilis (strain DSM 10674 / SJ95)).